A 122-amino-acid polypeptide reads, in one-letter code: Small ribosomal subunit protein bS6 (122 aa).

The disordered stretch occupies residues 96-122; it reads ETAPSPMMKAVQKEDAAKSHRTEAPAA. The segment covering 106-122 has biased composition (basic and acidic residues); that stretch reads VQKEDAAKSHRTEAPAA.

It belongs to the bacterial ribosomal protein bS6 family.

Functionally, binds together with bS18 to 16S ribosomal RNA. The sequence is that of Small ribosomal subunit protein bS6 from Herminiimonas arsenicoxydans.